We begin with the raw amino-acid sequence, 238 residues long: Large ribosomal subunit protein uL2 (238 aa).

The interval 198-238 (HPHGGGLHQSVSRPSTVSRNAPPGRKVGHIASRRTGRRGGA) is disordered. Over residues 206-216 (QSVSRPSTVSR) the composition is skewed to polar residues. A compositionally biased stretch (basic residues) spans 223–238 (KVGHIASRRTGRRGGA).

This sequence belongs to the universal ribosomal protein uL2 family. In terms of assembly, part of the 50S ribosomal subunit. Forms a bridge to the 30S subunit in the 70S ribosome.

Its function is as follows. One of the primary rRNA binding proteins. Required for association of the 30S and 50S subunits to form the 70S ribosome, for tRNA binding and peptide bond formation. It has been suggested to have peptidyltransferase activity; this is somewhat controversial. Makes several contacts with the 16S rRNA in the 70S ribosome. The protein is Large ribosomal subunit protein uL2 of Sulfolobus acidocaldarius (strain ATCC 33909 / DSM 639 / JCM 8929 / NBRC 15157 / NCIMB 11770).